The primary structure comprises 217 residues: 3,4-dihydroxy-2-butanone 4-phosphate synthase (217 aa).

Residues 37-38 (RE), Asp-42, 150-154 (RGGHT), and Glu-174 contribute to the D-ribulose 5-phosphate site. Glu-38 provides a ligand contact to Mg(2+). Residue His-153 coordinates Mg(2+).

It belongs to the DHBP synthase family. In terms of assembly, homodimer. Mg(2+) serves as cofactor. The cofactor is Mn(2+).

It carries out the reaction D-ribulose 5-phosphate = (2S)-2-hydroxy-3-oxobutyl phosphate + formate + H(+). It functions in the pathway cofactor biosynthesis; riboflavin biosynthesis; 2-hydroxy-3-oxobutyl phosphate from D-ribulose 5-phosphate: step 1/1. Catalyzes the conversion of D-ribulose 5-phosphate to formate and 3,4-dihydroxy-2-butanone 4-phosphate. The protein is 3,4-dihydroxy-2-butanone 4-phosphate synthase of Cronobacter sakazakii (strain ATCC BAA-894) (Enterobacter sakazakii).